Here is a 584-residue protein sequence, read N- to C-terminus: Arginine--tRNA ligase (584 aa).

Positions 126–136 (PNIAKEMHVGH) match the 'HIGH' region motif.

The protein belongs to the class-I aminoacyl-tRNA synthetase family. In terms of assembly, monomer.

It localises to the cytoplasm. The catalysed reaction is tRNA(Arg) + L-arginine + ATP = L-arginyl-tRNA(Arg) + AMP + diphosphate. This chain is Arginine--tRNA ligase, found in Synechococcus elongatus (strain ATCC 33912 / PCC 7942 / FACHB-805) (Anacystis nidulans R2).